The sequence spans 516 residues: Flagellar radial spoke protein 3 (516 aa).

Composition is skewed to polar residues over residues 1 to 11 and 62 to 74; these read MVQAKAQQQLY and ATQT…SPAS. Disordered stretches follow at residues 1–32, 60–90, 388–412, and 424–447; these read MVQA…EDET, ADAT…TPEA, NAKW…AAEE, and AAAE…DGVE. Over residues 391 to 412 the composition is skewed to basic and acidic residues; sequence WEADKAEAAEKARAEAEAAAEE.

It belongs to the flagellar radial spoke RSP3 family. In terms of assembly, interacts with FAP91. Post-translationally, protein 3 is one of the 5 radial spoke proteins that are phosphorylated. In terms of processing, protein 3a might only differ from protein 3 in being unphosphorylated.

It is found in the cytoplasm. Its subcellular location is the cytoskeleton. It localises to the flagellum axoneme. Functionally, protein 3 may attach the radial spoke to the outer doublet microtubule or is required to form a stable spoke structure. In terms of biological role, flagellar radial spokes contribute to the regulation of dynein arm activity and thus the pattern of flagellar bending. They consist of a thin stalk, which is attached to the a subfiber of the outer doublet microtubule, and a bulbous head, which is attached to the stalk and appears to interact with the projections from the central pair of microtubules. The polypeptide is Flagellar radial spoke protein 3 (Chlamydomonas reinhardtii (Chlamydomonas smithii)).